We begin with the raw amino-acid sequence, 106 residues long: UPF0213 protein KPN78578_35340 (106 aa).

A GIY-YIG domain is found at 13–88; the sequence is VCWFLYLIRT…KQLTKREKER (76 aa).

This sequence belongs to the UPF0213 family.

The protein is UPF0213 protein KPN78578_35340 of Klebsiella pneumoniae subsp. pneumoniae (strain ATCC 700721 / MGH 78578).